Reading from the N-terminus, the 350-residue chain is MQVSDFHFDLPDELIARYPQSERTASRLLQLNGNTGAVKDGSFKDVLELVQAGDLVVFNNTRVIPARMFGRKESGGKLEVLVERMLDEKRFLAHVRSSKSPKPGTLVFLGEEDQYSAEMVARQDALFELHLKADKTILEVLEEIGHMPLPPYIDRPDEDADKERYQTVYNQKPGAVAAPTAGLHFDNQLLEQIKAKGAEFAYVTLHVGAGTFQPVKVDNILEHHMHSEYAEVPQEVVDAIKATKARGGRVIAVGTTSVRSLESAAQESLKNGTELMPFFGDTEIFIFPGYQYQLVDCLITNFHLPESTLIMLVSAFAGYDHTMNAYQHAVANQYRFFSYGDAMFIEKKTQ.

The protein belongs to the QueA family. In terms of assembly, monomer.

The protein resides in the cytoplasm. It catalyses the reaction 7-aminomethyl-7-carbaguanosine(34) in tRNA + S-adenosyl-L-methionine = epoxyqueuosine(34) in tRNA + adenine + L-methionine + 2 H(+). Its pathway is tRNA modification; tRNA-queuosine biosynthesis. In terms of biological role, transfers and isomerizes the ribose moiety from AdoMet to the 7-aminomethyl group of 7-deazaguanine (preQ1-tRNA) to give epoxyqueuosine (oQ-tRNA). This is S-adenosylmethionine:tRNA ribosyltransferase-isomerase from Vibrio vulnificus (strain YJ016).